The following is a 465-amino-acid chain: Endo-1,3-1,4-beta-glycanase ExsH (465 aa).

Hemolysin-type calcium-binding repeat units follow at residues 33 to 50, 105 to 122, and 123 to 140; these read HGTA…VNVT, FGNE…TQTI, and DGRG…ADTF. The region spanning 206-462 is the GH16 domain; the sequence is AHQFRLSLDR…YIKAYSLDAD (257 aa). E349 (nucleophile) is an active-site residue. E354 (proton donor) is an active-site residue.

It belongs to the glycosyl hydrolase 16 family.

It is found in the secreted. Its pathway is glycan metabolism; exopolysaccharide biosynthesis. Functionally, cleaves high molecular weight succinoglycan to yield LMW succinoglycan. Dynamically regulates the molecular weight distribution of succinoglycan by cleaving nascent succinoglycan only during a limited period after its synthesis, perhaps before it undergoes a time-dependent change in its conformation or aggregation state. This Rhizobium meliloti (strain 1021) (Ensifer meliloti) protein is Endo-1,3-1,4-beta-glycanase ExsH (exsH).